A 453-amino-acid chain; its full sequence is ATP-dependent protease ATPase subunit HslU (453 aa).

ATP-binding positions include I18, 60–65, D266, E331, and R403; that span reads GVGKTE.

The protein belongs to the ClpX chaperone family. HslU subfamily. A double ring-shaped homohexamer of HslV is capped on each side by a ring-shaped HslU homohexamer. The assembly of the HslU/HslV complex is dependent on binding of ATP.

Its subcellular location is the cytoplasm. ATPase subunit of a proteasome-like degradation complex; this subunit has chaperone activity. The binding of ATP and its subsequent hydrolysis by HslU are essential for unfolding of protein substrates subsequently hydrolyzed by HslV. HslU recognizes the N-terminal part of its protein substrates and unfolds these before they are guided to HslV for hydrolysis. This is ATP-dependent protease ATPase subunit HslU from Desulforapulum autotrophicum (strain ATCC 43914 / DSM 3382 / VKM B-1955 / HRM2) (Desulfobacterium autotrophicum).